We begin with the raw amino-acid sequence, 448 residues long: Cysteine--tRNA ligase (448 aa).

Zn(2+) is bound at residue cysteine 27. Positions 29 to 39 (PTVYNYIHVGN) match the 'HIGH' region motif. Residues cysteine 210, histidine 235, and glutamate 239 each coordinate Zn(2+). Positions 267 to 271 (KMSKS) match the 'KMSKS' region motif. Lysine 270 is a binding site for ATP.

It belongs to the class-I aminoacyl-tRNA synthetase family. Monomer. The cofactor is Zn(2+).

The protein resides in the cytoplasm. It carries out the reaction tRNA(Cys) + L-cysteine + ATP = L-cysteinyl-tRNA(Cys) + AMP + diphosphate. This is Cysteine--tRNA ligase from Lactococcus lactis subsp. cremoris (strain MG1363).